The following is a 452-amino-acid chain: tRNA modification GTPase MnmE (452 aa).

Arg21, Glu82, and Arg121 together coordinate (6S)-5-formyl-5,6,7,8-tetrahydrofolate. Residues 217 to 373 (GINTTIIGKP…LENKIIEMFN (157 aa)) enclose the TrmE-type G domain. A K(+)-binding site is contributed by Asn227. Residues 227 to 232 (NVGKSS), 246 to 252 (TDIPGTT), and 271 to 274 (DTAG) each bind GTP. Ser231 provides a ligand contact to Mg(2+). Positions 246, 248, and 251 each coordinate K(+). Residue Thr252 coordinates Mg(2+). Residue Lys452 participates in (6S)-5-formyl-5,6,7,8-tetrahydrofolate binding.

It belongs to the TRAFAC class TrmE-Era-EngA-EngB-Septin-like GTPase superfamily. TrmE GTPase family. In terms of assembly, homodimer. Heterotetramer of two MnmE and two MnmG subunits. The cofactor is K(+).

It is found in the cytoplasm. Exhibits a very high intrinsic GTPase hydrolysis rate. Involved in the addition of a carboxymethylaminomethyl (cmnm) group at the wobble position (U34) of certain tRNAs, forming tRNA-cmnm(5)s(2)U34. In Finegoldia magna (strain ATCC 29328 / DSM 20472 / WAL 2508) (Peptostreptococcus magnus), this protein is tRNA modification GTPase MnmE.